A 216-amino-acid polypeptide reads, in one-letter code: Adenylate kinase (216 aa).

An ATP-binding site is contributed by 10–15 (GAGKGT). The tract at residues 30 to 59 (STGDMLRAAVAAGTEVGKRAKAVMDAGKLV) is NMP. Residues Thr31, Arg36, 57-59 (KLV), 85-88 (GFPR), and Gln92 each bind AMP. The segment at 126-163 (GRYTCANCGAGYHDENLRPKVEGVCDRCGSTHFKRRAD) is LID. Arg127 is a binding site for ATP. Zn(2+) is bound by residues Cys130, Cys133, Cys150, and Cys153. AMP-binding residues include Arg160 and Arg172. Ala200 serves as a coordination point for ATP.

It belongs to the adenylate kinase family. As to quaternary structure, monomer.

It localises to the cytoplasm. The enzyme catalyses AMP + ATP = 2 ADP. Its pathway is purine metabolism; AMP biosynthesis via salvage pathway; AMP from ADP: step 1/1. In terms of biological role, catalyzes the reversible transfer of the terminal phosphate group between ATP and AMP. Plays an important role in cellular energy homeostasis and in adenine nucleotide metabolism. This Rhizobium rhizogenes (strain K84 / ATCC BAA-868) (Agrobacterium radiobacter) protein is Adenylate kinase.